Reading from the N-terminus, the 460-residue chain is UDP-N-acetylmuramate--L-alanine ligase (460 aa).

118–124 (GTHGKTT) is a binding site for ATP.

Belongs to the MurCDEF family.

The protein resides in the cytoplasm. It carries out the reaction UDP-N-acetyl-alpha-D-muramate + L-alanine + ATP = UDP-N-acetyl-alpha-D-muramoyl-L-alanine + ADP + phosphate + H(+). The protein operates within cell wall biogenesis; peptidoglycan biosynthesis. Cell wall formation. The sequence is that of UDP-N-acetylmuramate--L-alanine ligase from Gloeobacter violaceus (strain ATCC 29082 / PCC 7421).